The primary structure comprises 366 residues: Cobalt-precorrin-5B C(1)-methyltransferase (366 aa).

The protein belongs to the CbiD family.

It carries out the reaction Co-precorrin-5B + S-adenosyl-L-methionine = Co-precorrin-6A + S-adenosyl-L-homocysteine. The protein operates within cofactor biosynthesis; adenosylcobalamin biosynthesis; cob(II)yrinate a,c-diamide from sirohydrochlorin (anaerobic route): step 6/10. In terms of biological role, catalyzes the methylation of C-1 in cobalt-precorrin-5B to form cobalt-precorrin-6A. The polypeptide is Cobalt-precorrin-5B C(1)-methyltransferase (Pseudomonas aeruginosa (strain UCBPP-PA14)).